The chain runs to 318 residues: Trans-prenyltransferase (318 aa).

A helical transmembrane segment spans residues 1–21; sequence MLHLIYISIIVVLIIILISYT. Isopentenyl diphosphate-binding residues include Lys85, Arg88, and His122. Mg(2+) contacts are provided by Asp129 and Asp135. Arg140 provides a ligand contact to dimethylallyl diphosphate. Arg141 contacts isopentenyl diphosphate. Lys216, Thr217, and Gln254 together coordinate dimethylallyl diphosphate.

This sequence belongs to the FPP/GGPP synthase family. Asfivirus trans-prenyltransferase subfamily. Mg(2+) is required as a cofactor.

The protein localises to the host endoplasmic reticulum. Its subcellular location is the host membrane. The catalysed reaction is isopentenyl diphosphate + dimethylallyl diphosphate = (2E)-geranyl diphosphate + diphosphate. It carries out the reaction isopentenyl diphosphate + (2E)-geranyl diphosphate = (2E,6E)-farnesyl diphosphate + diphosphate. It catalyses the reaction isopentenyl diphosphate + (2E,6E)-farnesyl diphosphate = (2E,6E,10E)-geranylgeranyl diphosphate + diphosphate. The enzyme catalyses isopentenyl diphosphate + (2E,6E,10E)-geranylgeranyl diphosphate = (2E,6E,10E,14E)-geranylfarnesyl diphosphate + diphosphate. Its pathway is isoprenoid biosynthesis; farnesyl diphosphate biosynthesis; farnesyl diphosphate from geranyl diphosphate and isopentenyl diphosphate: step 1/1. It participates in isoprenoid biosynthesis; geranyl diphosphate biosynthesis; geranyl diphosphate from dimethylallyl diphosphate and isopentenyl diphosphate: step 1/1. It functions in the pathway isoprenoid biosynthesis; geranylgeranyl diphosphate biosynthesis; geranylgeranyl diphosphate from farnesyl diphosphate and isopentenyl diphosphate: step 1/1. Functionally, trans-prenyltransferase that catalyzes the sequential condensation of isopentenyl diphosphate (IPP) with different allylic diphosphates, such as dimethylallyl diphosphate (DMAPP), geranyl diphosphate (GPP), farnesyl diphosphate (FPP) and geranylgeranyl diphosphate (GGPP), farnesyl diphosphate being the best allylic substrate. The protein is Trans-prenyltransferase of Ornithodoros (relapsing fever ticks).